The sequence spans 317 residues: Aspartate carbamoyltransferase catalytic subunit (317 aa).

Carbamoyl phosphate contacts are provided by Arg66 and Thr67. Lys94 is an L-aspartate binding site. Carbamoyl phosphate is bound by residues Arg116, His144, and Gln147. The L-aspartate site is built by Arg177 and Arg231. Gly272 and Pro273 together coordinate carbamoyl phosphate.

This sequence belongs to the aspartate/ornithine carbamoyltransferase superfamily. ATCase family. Heterododecamer (2C3:3R2) of six catalytic PyrB chains organized as two trimers (C3), and six regulatory PyrI chains organized as three dimers (R2).

The enzyme catalyses carbamoyl phosphate + L-aspartate = N-carbamoyl-L-aspartate + phosphate + H(+). It participates in pyrimidine metabolism; UMP biosynthesis via de novo pathway; (S)-dihydroorotate from bicarbonate: step 2/3. In terms of biological role, catalyzes the condensation of carbamoyl phosphate and aspartate to form carbamoyl aspartate and inorganic phosphate, the committed step in the de novo pyrimidine nucleotide biosynthesis pathway. This chain is Aspartate carbamoyltransferase catalytic subunit, found in Rhodopseudomonas palustris (strain ATCC BAA-98 / CGA009).